We begin with the raw amino-acid sequence, 546 residues long: Chaperonin GroEL (546 aa).

ATP-binding positions include 30–33 (TLGP), Lys-51, 87–91 (DGTTT), Gly-415, 479–481 (NAA), and Asp-495. The disordered stretch occupies residues 527–546 (DKPAAPPMPGGMGGMGGMDF). The span at 536-546 (GGMGGMGGMDF) shows a compositional bias: gly residues.

It belongs to the chaperonin (HSP60) family. As to quaternary structure, forms a cylinder of 14 subunits composed of two heptameric rings stacked back-to-back. Interacts with the co-chaperonin GroES.

The protein resides in the cytoplasm. The enzyme catalyses ATP + H2O + a folded polypeptide = ADP + phosphate + an unfolded polypeptide.. Functionally, together with its co-chaperonin GroES, plays an essential role in assisting protein folding. The GroEL-GroES system forms a nano-cage that allows encapsulation of the non-native substrate proteins and provides a physical environment optimized to promote and accelerate protein folding. The protein is Chaperonin GroEL of Bordetella petrii (strain ATCC BAA-461 / DSM 12804 / CCUG 43448).